The following is a 263-amino-acid chain: N-glycosylase/DNA lyase (263 aa).

The 8-oxoguanine site is built by Gln-43, Ser-71, and Trp-82. The helix-hairpin-helix stretch occupies residues 139–204; sequence RRYYFENMMG…EDVRIKAYTE (66 aa). Catalysis depends on Lys-164, which acts as the Schiff-base intermediate with DNA. Residues Phe-168 and Pro-194 each contribute to the 8-oxoguanine site. Residue Asp-196 is part of the active site. 8-oxoguanine-binding residues include Asp-230 and Trp-234.

It belongs to the archaeal N-glycosylase/DNA lyase (AGOG) family.

The enzyme catalyses 2'-deoxyribonucleotide-(2'-deoxyribose 5'-phosphate)-2'-deoxyribonucleotide-DNA = a 3'-end 2'-deoxyribonucleotide-(2,3-dehydro-2,3-deoxyribose 5'-phosphate)-DNA + a 5'-end 5'-phospho-2'-deoxyribonucleoside-DNA + H(+). In terms of biological role, DNA repair enzyme that is part of the base excision repair (BER) pathway; protects from oxidative damage by removing the major product of DNA oxidation, 8-oxoguanine (GO), from single- and double-stranded DNA substrates. This chain is N-glycosylase/DNA lyase, found in Thermococcus kodakarensis (strain ATCC BAA-918 / JCM 12380 / KOD1) (Pyrococcus kodakaraensis (strain KOD1)).